The following is a 331-amino-acid chain: GTP 3',8-cyclase (331 aa).

A Radical SAM core domain is found at proline 9–proline 233. Arginine 18 lines the GTP pocket. Residues cysteine 25 and cysteine 29 each coordinate [4Fe-4S] cluster. Tyrosine 31 lines the S-adenosyl-L-methionine pocket. Cysteine 32 provides a ligand contact to [4Fe-4S] cluster. Arginine 67 contributes to the GTP binding site. Glycine 71 provides a ligand contact to S-adenosyl-L-methionine. Threonine 98 serves as a coordination point for GTP. Residue serine 122 participates in S-adenosyl-L-methionine binding. Lysine 159 is a binding site for GTP. Residue methionine 193 coordinates S-adenosyl-L-methionine. Residues cysteine 257 and cysteine 260 each coordinate [4Fe-4S] cluster. Arginine 262–arginine 264 is a binding site for GTP. A [4Fe-4S] cluster-binding site is contributed by cysteine 274.

Belongs to the radical SAM superfamily. MoaA family. In terms of assembly, monomer and homodimer. It depends on [4Fe-4S] cluster as a cofactor.

The enzyme catalyses GTP + AH2 + S-adenosyl-L-methionine = (8S)-3',8-cyclo-7,8-dihydroguanosine 5'-triphosphate + 5'-deoxyadenosine + L-methionine + A + H(+). Its pathway is cofactor biosynthesis; molybdopterin biosynthesis. In terms of biological role, catalyzes the cyclization of GTP to (8S)-3',8-cyclo-7,8-dihydroguanosine 5'-triphosphate. This Ectopseudomonas mendocina (strain ymp) (Pseudomonas mendocina) protein is GTP 3',8-cyclase.